The chain runs to 217 residues: Adenylate kinase (217 aa).

10-15 (GGGKGT) provides a ligand contact to ATP. The tract at residues 30 to 59 (STGDMLRAAVASGSEVGKKAKAVMDAGQLV) is NMP. AMP contacts are provided by residues Thr31, Arg36, 57–59 (QLV), 85–88 (GFPR), and Gln92. Residues 126-164 (GRYTCAKCGAGYHDKFQLPQVAGKCDSCGGTEFARRPDD) are LID. An ATP-binding site is contributed by Arg127. Zn(2+) is bound by residues Cys130, Cys133, Cys150, and Cys153. Positions 161 and 172 each coordinate AMP. ATP is bound at residue Met200.

Belongs to the adenylate kinase family. As to quaternary structure, monomer.

It is found in the cytoplasm. The enzyme catalyses AMP + ATP = 2 ADP. It functions in the pathway purine metabolism; AMP biosynthesis via salvage pathway; AMP from ADP: step 1/1. In terms of biological role, catalyzes the reversible transfer of the terminal phosphate group between ATP and AMP. Plays an important role in cellular energy homeostasis and in adenine nucleotide metabolism. In Paramagnetospirillum magneticum (strain ATCC 700264 / AMB-1) (Magnetospirillum magneticum), this protein is Adenylate kinase.